The sequence spans 125 residues: Protein U2 (125 aa).

The protein belongs to the nanovirus U2 protein family.

The chain is Protein U2 (DNA-U2) from Milk vetch dwarf virus (isolate N) (MDV).